Here is a 227-residue protein sequence, read N- to C-terminus: Cytidylate kinase (227 aa).

12–20 is an ATP binding site; it reads GPGGAGKGT.

Belongs to the cytidylate kinase family. Type 1 subfamily.

It localises to the cytoplasm. The enzyme catalyses CMP + ATP = CDP + ADP. It catalyses the reaction dCMP + ATP = dCDP + ADP. The polypeptide is Cytidylate kinase (Klebsiella pneumoniae (strain 342)).